The primary structure comprises 69 residues: Protein transport protein Sec61 subunit gamma-1 (69 aa).

The residue at position 1 (Met-1) is an N-acetylmethionine. Over 1-32 (MDAIDSVVDPLRDFAKDSIRLVKRCHKPDRKE) the chain is Cytoplasmic. A helical transmembrane segment spans residues 33–61 (FTKVAVRTAIGFVVMGFVGFFVKLIFIPI). Topologically, residues 62-69 (NNIIVGAT) are extracellular.

This sequence belongs to the SecE/SEC61-gamma family. In terms of assembly, heterotrimeric complex composed of SEC61-alpha, SEC61-beta and SEC61-gamma.

Its subcellular location is the endoplasmic reticulum membrane. Functionally, necessary for protein translocation in the endoplasmic reticulum. In Arabidopsis thaliana (Mouse-ear cress), this protein is Protein transport protein Sec61 subunit gamma-1 (SEC61G1).